The following is a 103-amino-acid chain: ATP synthase F(0) complex subunit g, mitochondrial (103 aa).

At Ala-2 the chain carries N-acetylalanine. An N6-acetyllysine mark is found at Lys-11, Lys-24, Lys-35, and Lys-54.

It belongs to the ATPase g subunit family. As to quaternary structure, component of the ATP synthase complex composed at least of ATP5F1A/subunit alpha, ATP5F1B/subunit beta, ATP5MC1/subunit c (homooctomer), MT-ATP6/subunit a, MT-ATP8/subunit 8, ATP5ME/subunit e, ATP5MF/subunit f, ATP5MG/subunit g, ATP5MK/subunit k, ATP5MJ/subunit j, ATP5F1C/subunit gamma, ATP5F1D/subunit delta, ATP5F1E/subunit epsilon, ATP5PF/subunit F6, ATP5PB/subunit b, ATP5PD/subunit d, ATP5PO/subunit OSCP. ATP synthase complex consists of a soluble F(1) head domain (subunits alpha(3) and beta(3)) - the catalytic core - and a membrane F(0) domain - the membrane proton channel (subunits c, a, 8, e, f, g, k and j). These two domains are linked by a central stalk (subunits gamma, delta, and epsilon) rotating inside the F1 region and a stationary peripheral stalk (subunits F6, b, d, and OSCP).

It localises to the mitochondrion. The protein localises to the mitochondrion inner membrane. Subunit g, of the mitochondrial membrane ATP synthase complex (F(1)F(0) ATP synthase or Complex V) that produces ATP from ADP in the presence of a proton gradient across the membrane which is generated by electron transport complexes of the respiratory chain. ATP synthase complex consist of a soluble F(1) head domain - the catalytic core - and a membrane F(1) domain - the membrane proton channel. These two domains are linked by a central stalk rotating inside the F(1) region and a stationary peripheral stalk. During catalysis, ATP synthesis in the catalytic domain of F(1) is coupled via a rotary mechanism of the central stalk subunits to proton translocation. In vivo, can only synthesize ATP although its ATP hydrolase activity can be activated artificially in vitro. Part of the complex F(0) domain. This is ATP synthase F(0) complex subunit g, mitochondrial from Pongo abelii (Sumatran orangutan).